A 357-amino-acid polypeptide reads, in one-letter code: Histidine biosynthesis bifunctional protein HisB (357 aa).

Positions 1–168 (MSEKVLFIDR…IVFKLTKKHD (168 aa)) are histidinol-phosphatase. Catalysis depends on aspartate 9, which acts as the Nucleophile. Mg(2+) is bound by residues aspartate 9 and aspartate 11. Residue aspartate 11 is the Proton donor of the active site. Cysteine 93, histidine 95, cysteine 101, and cysteine 103 together coordinate Zn(2+). Aspartate 130 is a Mg(2+) binding site. Residues 169–357 (RHAKVVRNTK…KNLPSSKGLL (189 aa)) are imidazoleglycerol-phosphate dehydratase.

In the N-terminal section; belongs to the histidinol-phosphatase family. The protein in the C-terminal section; belongs to the imidazoleglycerol-phosphate dehydratase family. Mg(2+) serves as cofactor. Zn(2+) is required as a cofactor.

The protein localises to the cytoplasm. The catalysed reaction is D-erythro-1-(imidazol-4-yl)glycerol 3-phosphate = 3-(imidazol-4-yl)-2-oxopropyl phosphate + H2O. It catalyses the reaction L-histidinol phosphate + H2O = L-histidinol + phosphate. Its pathway is amino-acid biosynthesis; L-histidine biosynthesis; L-histidine from 5-phospho-alpha-D-ribose 1-diphosphate: step 6/9. The protein operates within amino-acid biosynthesis; L-histidine biosynthesis; L-histidine from 5-phospho-alpha-D-ribose 1-diphosphate: step 8/9. The sequence is that of Histidine biosynthesis bifunctional protein HisB from Buchnera aphidicola subsp. Baizongia pistaciae (strain Bp).